The primary structure comprises 30 residues: Trypsin inhibitor 3 (30 aa).

At glutamine 1 the chain carries Pyrrolidone carboxylic acid. 3 disulfides stabilise this stretch: cysteine 4/cysteine 21, cysteine 11/cysteine 23, and cysteine 17/cysteine 29.

It localises to the secreted. In terms of biological role, inhibits trypsin; probably participates in a plant defense mechanism. The chain is Trypsin inhibitor 3 from Momordica cochinchinensis (Spiny bitter cucumber).